Consider the following 292-residue polypeptide: Small ribosomal subunit protein uS5 (292 aa).

Residues 1–56 (MADDAGAAGGPGGPGGPGMGGRGGFRGGFGSGIRGRGRGRGRGRGRGRGARGGKAE) are disordered. Position 2 is an N-acetylalanine (A2). A compositionally biased stretch (gly residues) spans 7-34 (AAGGPGGPGGPGMGGRGGFRGGFGSGIR). Residues 35-51 (GRGRGRGRGRGRGRGAR) show a composition bias toward basic residues. Glycyl lysine isopeptide (Lys-Gly) (interchain with G-Cter in ubiquitin) cross-links involve residues K54 and K58. The 64-residue stretch at 102-165 (LKDEVLKIMP…ILAKLSIVPV (64 aa)) folds into the S5 DRBM domain. Phosphothreonine is present on T251. K262 carries the N6-acetyllysine modification. S263 is modified (phosphoserine). A Phosphothreonine modification is found at T269. K274 bears the N6-acetyllysine; alternate mark. K274 is covalently cross-linked (Glycyl lysine isopeptide (Lys-Gly) (interchain with G-Cter in SUMO1); alternate). K274 participates in a covalent cross-link: Glycyl lysine isopeptide (Lys-Gly) (interchain with G-Cter in SUMO2); alternate. Residue K274 forms a Glycyl lysine isopeptide (Lys-Gly) (interchain with G-Cter in ubiquitin); alternate linkage. The residue at position 280 (S280) is a Phosphoserine.

It belongs to the universal ribosomal protein uS5 family. In terms of assembly, component of the small ribosomal subunit. Interacts with zinc finger protein ZNF277 (via zinc-finger domains); the interaction is direct; the interaction is extra-ribosomal. Interaction with ZNF277 competes with the binding of RPS2 to protein arginine methyltransferase PRMT3. Post-translationally, citrullinated by PADI4 in the Arg/Gly-rich region. Asymmetric arginine dimethylation by PRMT3 occurs at multiple sites in the Arg/Gly-rich region. In terms of processing, monoubiquitinated at Lys-54 and Lys-58 by RNF10 when a ribosome has stalled during translation, leading to its degradation by the proteasome. Deubiquitinated at Lys-54 and Lys-58 by USP10, preventing degradation by the proteasome and promoting 40S ribosome subunit recycling following ribosome dissociation.

Its subcellular location is the cytoplasm. It localises to the nucleus. It is found in the nucleolus. In terms of biological role, component of the ribosome, a large ribonucleoprotein complex responsible for the synthesis of proteins in the cell. The small ribosomal subunit (SSU) binds messenger RNAs (mRNAs) and translates the encoded message by selecting cognate aminoacyl-transfer RNA (tRNA) molecules. The large subunit (LSU) contains the ribosomal catalytic site termed the peptidyl transferase center (PTC), which catalyzes the formation of peptide bonds, thereby polymerizing the amino acids delivered by tRNAs into a polypeptide chain. The nascent polypeptides leave the ribosome through a tunnel in the LSU and interact with protein factors that function in enzymatic processing, targeting, and the membrane insertion of nascent chains at the exit of the ribosomal tunnel. Plays a role in the assembly and function of the 40S ribosomal subunit. In Oryctolagus cuniculus (Rabbit), this protein is Small ribosomal subunit protein uS5 (RPS2).